A 280-amino-acid polypeptide reads, in one-letter code: Acetyl-coenzyme A carboxylase carboxyl transferase subunit beta (280 aa).

A CoA carboxyltransferase N-terminal domain is found at 28 to 280 (LFLACPYCGA…IVRLHTAEAE (253 aa)). Positions 32, 35, 50, and 53 each coordinate Zn(2+). The segment at 32–53 (CPYCGAQMYNKQLGKYRVCAKC) adopts a C4-type zinc-finger fold.

The protein belongs to the AccD/PCCB family. Acetyl-CoA carboxylase is a heterohexamer composed of biotin carboxyl carrier protein (AccB), biotin carboxylase (AccC) and two subunits each of ACCase subunit alpha (AccA) and ACCase subunit beta (AccD). It depends on Zn(2+) as a cofactor.

It is found in the cytoplasm. It carries out the reaction N(6)-carboxybiotinyl-L-lysyl-[protein] + acetyl-CoA = N(6)-biotinyl-L-lysyl-[protein] + malonyl-CoA. It participates in lipid metabolism; malonyl-CoA biosynthesis; malonyl-CoA from acetyl-CoA: step 1/1. Its function is as follows. Component of the acetyl coenzyme A carboxylase (ACC) complex. Biotin carboxylase (BC) catalyzes the carboxylation of biotin on its carrier protein (BCCP) and then the CO(2) group is transferred by the transcarboxylase to acetyl-CoA to form malonyl-CoA. In Leuconostoc mesenteroides subsp. mesenteroides (strain ATCC 8293 / DSM 20343 / BCRC 11652 / CCM 1803 / JCM 6124 / NCDO 523 / NBRC 100496 / NCIMB 8023 / NCTC 12954 / NRRL B-1118 / 37Y), this protein is Acetyl-coenzyme A carboxylase carboxyl transferase subunit beta.